The primary structure comprises 415 residues: Serine hydroxymethyltransferase (415 aa).

Residues Leu119 and 123–125 (GHL) each bind (6S)-5,6,7,8-tetrahydrofolate. Lys228 carries the post-translational modification N6-(pyridoxal phosphate)lysine. 353-355 (SAF) serves as a coordination point for (6S)-5,6,7,8-tetrahydrofolate.

The protein belongs to the SHMT family. As to quaternary structure, homodimer. Requires pyridoxal 5'-phosphate as cofactor.

Its subcellular location is the cytoplasm. The enzyme catalyses (6R)-5,10-methylene-5,6,7,8-tetrahydrofolate + glycine + H2O = (6S)-5,6,7,8-tetrahydrofolate + L-serine. The protein operates within one-carbon metabolism; tetrahydrofolate interconversion. Its pathway is amino-acid biosynthesis; glycine biosynthesis; glycine from L-serine: step 1/1. In terms of biological role, catalyzes the reversible interconversion of serine and glycine with tetrahydrofolate (THF) serving as the one-carbon carrier. Also exhibits THF-independent aldolase activity toward beta-hydroxyamino acids, producing glycine and aldehydes, via a retro-aldol mechanism. The polypeptide is Serine hydroxymethyltransferase (Haloarcula marismortui (strain ATCC 43049 / DSM 3752 / JCM 8966 / VKM B-1809) (Halobacterium marismortui)).